The following is a 714-amino-acid chain: Structure-specific endonuclease subunit SLX4 1 (714 aa).

Basic and acidic residues-rich tracts occupy residues 1 to 14 (MSPE…EDNL) and 24 to 34 (IHEETLAEESH). Disordered stretches follow at residues 1 to 116 (MSPE…QGSI) and 337 to 369 (DSSG…KTPQ). Residues 36-46 (QSIQRSISRLS) are compositionally biased toward low complexity. Positions 79–92 (KTKKRKLKVSKPRK) are enriched in basic residues.

The protein belongs to the SLX4 family. In terms of assembly, forms a heterodimer with SLX1. Post-translationally, phosphorylated in response to DNA damage.

It is found in the nucleus. Regulatory subunit of the SLX1-SLX4 structure-specific endonuclease that resolves DNA secondary structures generated during DNA repair and recombination. Has endonuclease activity towards branched DNA substrates, introducing single-strand cuts in duplex DNA close to junctions with ss-DNA. This is Structure-specific endonuclease subunit SLX4 1 from Candida tropicalis (strain ATCC MYA-3404 / T1) (Yeast).